The following is a 211-amino-acid chain: Outer-membrane lipoprotein carrier protein (211 aa).

The first 24 residues, Met-1 to Ala-24, serve as a signal peptide directing secretion.

It belongs to the LolA family. As to quaternary structure, monomer.

Its subcellular location is the periplasm. Functionally, participates in the translocation of lipoproteins from the inner membrane to the outer membrane. Only forms a complex with a lipoprotein if the residue after the N-terminal Cys is not an aspartate (The Asp acts as a targeting signal to indicate that the lipoprotein should stay in the inner membrane). The polypeptide is Outer-membrane lipoprotein carrier protein (Cupriavidus taiwanensis (strain DSM 17343 / BCRC 17206 / CCUG 44338 / CIP 107171 / LMG 19424 / R1) (Ralstonia taiwanensis (strain LMG 19424))).